We begin with the raw amino-acid sequence, 478 residues long: Glutamine synthetase (478 aa).

The 85-residue stretch at 16-100 folds into the GS beta-grasp domain; the sequence is EKVEYVDVRF…INFFVHDPFT (85 aa). One can recognise a GS catalytic domain in the interval 108–478; sequence PRNIARKAEN…PYEFALYYDV (371 aa). The Mg(2+) site is built by Glu133 and Glu135. Glu214 serves as a coordination point for ATP. Glu219 and Glu227 together coordinate Mg(2+). 230–232 provides a ligand contact to ATP; that stretch reads YQF. L-glutamate-binding positions include 271 to 272 and Gly272; that span reads NG. His276 contributes to the Mg(2+) binding site. Residues 278–280 and Ser280 each bind ATP; that span reads HQS. L-glutamate is bound by residues Arg329, Glu335, and Arg347. The ATP site is built by Arg347, Arg352, and Lys361. Glu366 is a binding site for Mg(2+). Arg368 is a binding site for L-glutamate. Tyr406 carries the post-translational modification O-AMP-tyrosine.

The protein belongs to the glutamine synthetase family. In terms of assembly, oligomer of 12 subunits arranged in the form of two hexagons. Mg(2+) serves as cofactor.

The protein localises to the cytoplasm. The catalysed reaction is L-glutamate + NH4(+) + ATP = L-glutamine + ADP + phosphate + H(+). Its activity is regulated as follows. When cellular nitrogen levels are high, the C-terminal adenylyl transferase (AT) of GlnE inhibits GlnA by covalent transfer of an adenylyl group from ATP to Tyr-406. Conversely, when nitrogen levels are low, the N-terminal adenylyl removase (AR) of GlnE activates GlnA by removing the adenylyl group by phosphorolysis. The fully adenylated enzyme complex is inactive. Its function is as follows. Involved in nitrogen metabolism via ammonium assimilation. Catalyzes the ATP-dependent biosynthesis of glutamine from glutamate and ammonia. Also plays a key role in controlling the ammonia levels within infected host cells and so contributes to the pathogens capacity to inhibit phagosome acidification and phagosome-lysosome fusion. Involved in cell wall biosynthesis via the production of the major component poly-L-glutamine (PLG). PLG synthesis in the cell wall occurs only in nitrogen limiting conditions and on the contrary high nitrogen conditions inhibit PLG synthesis. The polypeptide is Glutamine synthetase (Mycobacterium bovis (strain ATCC BAA-935 / AF2122/97)).